The primary structure comprises 129 residues: UPF0102 protein CT2262 (129 aa).

The protein belongs to the UPF0102 family.

This Chlorobaculum tepidum (strain ATCC 49652 / DSM 12025 / NBRC 103806 / TLS) (Chlorobium tepidum) protein is UPF0102 protein CT2262.